The following is a 379-amino-acid chain: MKTTFLVSLATAALSSTAAAVSVSGSAEGFAKGVTGGGSATAVYPDTIDELVSYLGDDEARVIVLSKTFDFTDSEGTTTETGCAPWGTDAACQVAINQNDWCTNYQPDAPSVSVTYDNAGTLGITVNSDKTLIGEGSAGVIKGKGLRLVSGTSNVIIQNIAITDINPKYVWGGDAITLNDVDMVWIDHVTTARIARQHIVLGTEADNRVTISNSFINGESDYSATCDGYHYWGIYLDGSSDMVTMKGNYIYHTSGRSPKVQGNTLLHAVNNYWHDNSDHAFEIGEGAYVLAEGNVFQNIPTVAEDPIEGELFASPSESANEVCSTYLGRVCELNGFGSSGTFNQADTDFLSKFEGKNIASADSYSSVASSVASSAGNTL.

Positions 1-20 are cleaved as a signal peptide; sequence MKTTFLVSLATAALSSTAAA. 2 disulfide bridges follow: Cys83–Cys102 and Cys92–Cys226. Residue Arg256 is part of the active site. Cys323 and Cys331 form a disulfide bridge.

Belongs to the polysaccharide lyase 1 family.

Its subcellular location is the secreted. It carries out the reaction Eliminative cleavage of (1-&gt;4)-alpha-D-galacturonan methyl ester to give oligosaccharides with 4-deoxy-6-O-methyl-alpha-D-galact-4-enuronosyl groups at their non-reducing ends.. Pectinolytic enzymes consist of four classes of enzymes: pectin lyase, polygalacturonase, pectin methylesterase and rhamnogalacturonase. Among pectinolytic enzymes, pectin lyase is the most important in depolymerization of pectin, since it cleaves internal glycosidic bonds of highly methylated pectins. This chain is Pectin lyase A (pelA), found in Emericella nidulans (strain FGSC A4 / ATCC 38163 / CBS 112.46 / NRRL 194 / M139) (Aspergillus nidulans).